Here is a 1001-residue protein sequence, read N- to C-terminus: Phosphoenolpyruvate carboxylase (1001 aa).

Residues histidine 189 and lysine 642 contribute to the active site.

The protein belongs to the PEPCase type 1 family. It depends on Mg(2+) as a cofactor.

It catalyses the reaction oxaloacetate + phosphate = phosphoenolpyruvate + hydrogencarbonate. Functionally, forms oxaloacetate, a four-carbon dicarboxylic acid source for the tricarboxylic acid cycle. The polypeptide is Phosphoenolpyruvate carboxylase (Prochlorococcus marinus (strain SARG / CCMP1375 / SS120)).